A 162-amino-acid chain; its full sequence is Probable chemoreceptor glutamine deamidase CheD (162 aa).

This sequence belongs to the CheD family.

The enzyme catalyses L-glutaminyl-[protein] + H2O = L-glutamyl-[protein] + NH4(+). Functionally, probably deamidates glutamine residues to glutamate on methyl-accepting chemotaxis receptors (MCPs), playing an important role in chemotaxis. The sequence is that of Probable chemoreceptor glutamine deamidase CheD from Caldanaerobacter subterraneus subsp. tengcongensis (strain DSM 15242 / JCM 11007 / NBRC 100824 / MB4) (Thermoanaerobacter tengcongensis).